An 82-amino-acid polypeptide reads, in one-letter code: Cytotoxin homolog Clbp-3 (82 aa).

Residues 1–21 form the signal peptide; it reads MKTLLLTLVVVTIVCLDLGYT. Cystine bridges form between cysteine 24/cysteine 43, cysteine 36/cysteine 60, cysteine 64/cysteine 75, and cysteine 76/cysteine 81.

The protein belongs to the three-finger toxin family. Short-chain subfamily. Orphan group XV sub-subfamily. Expressed by the venom gland.

The protein resides in the secreted. It is found in the target cell membrane. In terms of biological role, has low cytotoxic activity. The sequence is that of Cytotoxin homolog Clbp-3 from Naja atra (Chinese cobra).